A 154-amino-acid chain; its full sequence is Lipoprotein signal peptidase (154 aa).

The next 2 helical transmembrane spans lie at 55-75 (GHMWFFYLITVVVIGIIIYIM) and 84-104 (LFSISLAFILGGAIGNFIDRV). Active-site residues include Asp-111 and Asp-129. Residues 124–144 (IFNVADAALSVGVVLMLVYVF) form a helical membrane-spanning segment.

Belongs to the peptidase A8 family.

The protein localises to the cell membrane. It carries out the reaction Release of signal peptides from bacterial membrane prolipoproteins. Hydrolyzes -Xaa-Yaa-Zaa-|-(S,diacylglyceryl)Cys-, in which Xaa is hydrophobic (preferably Leu), and Yaa (Ala or Ser) and Zaa (Gly or Ala) have small, neutral side chains.. It functions in the pathway protein modification; lipoprotein biosynthesis (signal peptide cleavage). In terms of biological role, this protein specifically catalyzes the removal of signal peptides from prolipoproteins. The protein is Lipoprotein signal peptidase of Listeria monocytogenes serotype 4b (strain CLIP80459).